The following is a 416-amino-acid chain: Adenylosuccinate synthetase (416 aa).

GTP contacts are provided by residues 13–19 (GDEGKGK) and 41–43 (GHT). The Proton acceptor role is filled by Asp14. Positions 14 and 41 each coordinate Mg(2+). Residues 14 to 17 (DEGK), 39 to 42 (NAGH), Thr126, Arg140, Gln220, Thr235, and Arg299 each bind IMP. His42 acts as the Proton donor in catalysis. 295 to 301 (TTTGRRR) contacts substrate. GTP is bound by residues Arg301, 327–329 (KLD), and 405–407 (STS).

Belongs to the adenylosuccinate synthetase family. As to quaternary structure, homodimer. Requires Mg(2+) as cofactor.

It is found in the cytoplasm. The catalysed reaction is IMP + L-aspartate + GTP = N(6)-(1,2-dicarboxyethyl)-AMP + GDP + phosphate + 2 H(+). Its pathway is purine metabolism; AMP biosynthesis via de novo pathway; AMP from IMP: step 1/2. Its function is as follows. Plays an important role in the de novo pathway of purine nucleotide biosynthesis. Catalyzes the first committed step in the biosynthesis of AMP from IMP. This chain is Adenylosuccinate synthetase, found in Campylobacter curvus (strain 525.92).